A 438-amino-acid polypeptide reads, in one-letter code: Transposon Ty2-C Gag polyprotein (438 aa).

3 stretches are compositionally biased toward polar residues: residues 1-11 (MESQQLHQNPR), 19-39 (ASVT…SASN), and 49-60 (KVNSQQETTPGT). 3 disordered regions span residues 1–88 (MESQ…YQQH), 365–397 (NVSR…AKAH), and 419–438 (SSQY…TERI). Residues 295–397 (ENNINVSDRL…SSKPRAAKAH (103 aa)) form an RNA-binding region. The segment covering 369 to 382 (TSPNTTNTKVTTRN) has biased composition (low complexity).

Homotrimer.

The protein resides in the cytoplasm. In terms of biological role, capsid protein (CA) is the structural component of the virus-like particle (VLP), forming the shell that encapsulates the retrotransposons dimeric RNA genome. The particles are assembled from trimer-clustered units and there are holes in the capsid shells that allow for the diffusion of macromolecules. CA also has nucleocapsid-like chaperone activity, promoting primer tRNA(i)-Met annealing to the multipartite primer-binding site (PBS), dimerization of Ty2 RNA and initiation of reverse transcription. The sequence is that of Transposon Ty2-C Gag polyprotein (TY2A-C) from Saccharomyces cerevisiae (strain ATCC 204508 / S288c) (Baker's yeast).